The following is a 529-amino-acid chain: Cytochrome P450 monooxygenase oblE (529 aa).

A helical transmembrane segment spans residues 38–58 (WQYIVTLLIAIITYDQVMYIW). Residue cysteine 477 participates in heme binding.

This sequence belongs to the cytochrome P450 family. Requires heme as cofactor.

It localises to the membrane. It functions in the pathway secondary metabolite biosynthesis; terpenoid biosynthesis. Cytochrome P450 monooxygenase; part of the gene cluster that mediates the biosynthesis of the sesterterpenes ophiobolins, fungal phytotoxins with potential anti-cancer activities. The first step of the pathway is performed by the sesterterpene synthase oblA that possesses both prenyl transferase and terpene cyclase activity, converting isopentenyl diphosphate and dimethylallyl diphosphate into geranylfarnesyl diphosphate (GFPP) and further converting GFPP into ophiobolin F, respectively. Other sesterterpenoids (C(25) terpenoids) are found as minor products of oblA. The cytochrome P450 monooxygenase oblB then catalyzes a four-step oxidative transformation of ophiobolin F to yield ophiobolin C. The function of the cytochrome P450 monooxygenase oblE has still to be determined. In Emericella variicolor (Aspergillus stellatus), this protein is Cytochrome P450 monooxygenase oblE.